An 870-amino-acid polypeptide reads, in one-letter code: DNA topoisomerase 1 (870 aa).

The Toprim domain occupies 1 to 128 (MKSPRFRHSQ…RVYKSSFEAA (128 aa)). The 436-residue stretch at 143–578 (YDGLAYSAKA…QTNAFVQKIT (436 aa)) folds into the Topo IA-type catalytic domain. The interval 180-185 (SSGRVQ) is interaction with DNA. The active-site O-(5'-phospho-DNA)-tyrosine intermediate is Tyr-299. 3 consecutive C4-type zinc fingers follow at residues 603–627 (CQCP…HPNC), 693–717 (CPKC…QNGC), and 784–807 (CPLC…KRGC).

The protein belongs to the type IA topoisomerase family. As to quaternary structure, monomer.

The enzyme catalyses ATP-independent breakage of single-stranded DNA, followed by passage and rejoining.. In terms of biological role, releases the supercoiling and torsional tension of DNA, which is introduced during the DNA replication and transcription, by transiently cleaving and rejoining one strand of the DNA duplex. Introduces a single-strand break via transesterification at a target site in duplex DNA. The scissile phosphodiester is attacked by the catalytic tyrosine of the enzyme, resulting in the formation of a DNA-(5'-phosphotyrosyl)-enzyme intermediate and the expulsion of a 3'-OH DNA strand. The free DNA strand then undergoes passage around the unbroken strand, thus removing DNA supercoils. Finally, in the religation step, the DNA 3'-OH attacks the covalent intermediate to expel the active-site tyrosine and restore the DNA phosphodiester backbone. The sequence is that of DNA topoisomerase 1 (topX) from Bacillus anthracis.